The primary structure comprises 228 residues: Probable septum site-determining protein MinC (228 aa).

Belongs to the MinC family. As to quaternary structure, interacts with MinD and FtsZ.

In terms of biological role, cell division inhibitor that blocks the formation of polar Z ring septums. Rapidly oscillates between the poles of the cell to destabilize FtsZ filaments that have formed before they mature into polar Z rings. Prevents FtsZ polymerization. The sequence is that of Probable septum site-determining protein MinC from Bacillus anthracis (strain A0248).